Here is a 506-residue protein sequence, read N- to C-terminus: Aldehyde dehydrogenase [NAD(P)+] 2 (506 aa).

Glu-268 acts as the Proton acceptor in catalysis. Residue Cys-302 is the Nucleophile of the active site.

It belongs to the aldehyde dehydrogenase family.

It is found in the cytoplasm. The catalysed reaction is an aldehyde + NAD(+) + H2O = a carboxylate + NADH + 2 H(+). The enzyme catalyses 3-aminopropanal + NAD(+) + H2O = beta-alanine + NADH + 2 H(+). Cytoplasmic aldehyde dehydrogenase involved in ethanol oxidation. Involved in pantothenic acid production through the conversion of 3-aminopropanal to beta-alanine, an intermediate in pantothenic acid (vitamin B5) and coenzyme A (CoA) biosynthesis. The sequence is that of Aldehyde dehydrogenase [NAD(P)+] 2 (ALD3) from Saccharomyces cerevisiae (strain ATCC 204508 / S288c) (Baker's yeast).